Consider the following 272-residue polypeptide: Large ribosomal subunit protein uL4 (272 aa).

This sequence belongs to the universal ribosomal protein uL4 family. As to quaternary structure, part of the 50S ribosomal subunit.

Functionally, one of the primary rRNA binding proteins, this protein initially binds near the 5'-end of the 23S rRNA. It is important during the early stages of 50S assembly. It makes multiple contacts with different domains of the 23S rRNA in the assembled 50S subunit and ribosome. Its function is as follows. Forms part of the polypeptide exit tunnel. This Aeropyrum pernix (strain ATCC 700893 / DSM 11879 / JCM 9820 / NBRC 100138 / K1) protein is Large ribosomal subunit protein uL4.